The sequence spans 301 residues: Probable 5-dehydro-4-deoxyglucarate dehydratase (301 aa).

Belongs to the DapA family.

The enzyme catalyses 5-dehydro-4-deoxy-D-glucarate + H(+) = 2,5-dioxopentanoate + CO2 + H2O. The protein operates within carbohydrate acid metabolism; D-glucarate degradation; 2,5-dioxopentanoate from D-glucarate: step 2/2. This Allorhizobium ampelinum (strain ATCC BAA-846 / DSM 112012 / S4) (Agrobacterium vitis (strain S4)) protein is Probable 5-dehydro-4-deoxyglucarate dehydratase.